A 493-amino-acid chain; its full sequence is Transmembrane protein 184 homolog DDB_G0284525 (493 aa).

A compositionally biased stretch (polar residues) spans 1 to 10 (MTQESSSSNH). Positions 1–25 (MTQESSSSNHYVDESSFDNNNNNNN) are disordered. A run of 7 helical transmembrane segments spans residues 46-66 (VPAL…ATIL), 87-107 (IVRI…SLLL), 119-139 (DCYE…YGGG), 180-200 (YVLV…FGLY), 212-232 (FYNA…VVLF), 254-274 (IVVF…NFGW), and 293-313 (FLIC…FPYE). N-linked (GlcNAc...) asparagine glycosylation is found at asparagine 415 and asparagine 416.

The protein belongs to the TMEM184 family.

The protein localises to the cell membrane. Its function is as follows. Probable transporter. The protein is Transmembrane protein 184 homolog DDB_G0284525 (tmem184A) of Dictyostelium discoideum (Social amoeba).